A 200-amino-acid polypeptide reads, in one-letter code: dTTP/UTP pyrophosphatase (200 aa).

Asp-72 acts as the Proton acceptor in catalysis.

It belongs to the Maf family. YhdE subfamily. It depends on a divalent metal cation as a cofactor.

It localises to the cytoplasm. The catalysed reaction is dTTP + H2O = dTMP + diphosphate + H(+). It carries out the reaction UTP + H2O = UMP + diphosphate + H(+). In terms of biological role, nucleoside triphosphate pyrophosphatase that hydrolyzes dTTP and UTP. May have a dual role in cell division arrest and in preventing the incorporation of modified nucleotides into cellular nucleic acids. The sequence is that of dTTP/UTP pyrophosphatase from Pseudomonas savastanoi pv. phaseolicola (strain 1448A / Race 6) (Pseudomonas syringae pv. phaseolicola (strain 1448A / Race 6)).